Here is a 123-residue protein sequence, read N- to C-terminus: UPF0212 protein rrnAC0441 (123 aa).

This sequence belongs to the UPF0212 family.

The chain is UPF0212 protein rrnAC0441 from Haloarcula marismortui (strain ATCC 43049 / DSM 3752 / JCM 8966 / VKM B-1809) (Halobacterium marismortui).